Consider the following 162-residue polypeptide: MQFSLSYLISIFYIILITSETTAFSPKRPNLYIWLAQNSYICDPTLLNKRTHRFLTPWESVRLRCSCGDPLATKSACGRKHGNSNQKLACFRLPDPCLREYAVIFEHGGNRLSVPLPPSKPHRIVTAVRKTVTTKHSQRTPKIVSTIPVGAVLRVKKVKEKL.

A helical transmembrane segment spans residues 6–24 (SYLISIFYIILITSETTAF).

It localises to the membrane. This is an uncharacterized protein from Caenorhabditis elegans.